Consider the following 172-residue polypeptide: Bifunctional protein PyrR (172 aa).

The PRPP-binding signature appears at 90-102; the sequence is LVLVDDVLMSGRT.

The protein belongs to the purine/pyrimidine phosphoribosyltransferase family. PyrR subfamily.

It catalyses the reaction UMP + diphosphate = 5-phospho-alpha-D-ribose 1-diphosphate + uracil. Functionally, regulates the transcription of the pyrimidine nucleotide (pyr) operon in response to exogenous pyrimidines. In terms of biological role, also displays a weak uracil phosphoribosyltransferase activity which is not physiologically significant. The chain is Bifunctional protein PyrR from Pseudomonas putida (strain GB-1).